A 72-amino-acid polypeptide reads, in one-letter code: Bowman-Birk type trypsin inhibitor (72 aa).

7 disulfides stabilise this stretch: cysteine 12/cysteine 66, cysteine 13/cysteine 28, cysteine 16/cysteine 62, cysteine 18/cysteine 26, cysteine 36/cysteine 43, cysteine 40/cysteine 55, and cysteine 45/cysteine 53.

This sequence belongs to the Bowman-Birk serine protease inhibitor family.

In Vigna radiata var. radiata (Mung bean), this protein is Bowman-Birk type trypsin inhibitor.